A 126-amino-acid polypeptide reads, in one-letter code: Putative phosphotransferase enzyme IIB component UU178 (126 aa).

The chain crosses the membrane as a helical span at residues 11–31 (LIIFLGIITFGIFIIYFFTKA). Residues 49-126 (PFSLNDFYNC…KELIKKDLFS (78 aa)) form the PTS EIIB type-1 domain.

To M.genitalium MG129 and M.pneumoniae MPN268.

The protein localises to the membrane. Its function is as follows. The phosphoenolpyruvate-dependent sugar phosphotransferase system (PTS), a major carbohydrate active -transport system, catalyzes the phosphorylation of incoming sugar substrates concomitant with their translocation across the cell membrane. The chain is Putative phosphotransferase enzyme IIB component UU178 from Ureaplasma parvum serovar 3 (strain ATCC 700970).